The chain runs to 31 residues: Photosystem II reaction center protein T (31 aa).

The helical transmembrane segment at 3–23 (ALVYVFLLVGTLMVIFFAIFF) threads the bilayer.

It belongs to the PsbT family. As to quaternary structure, PSII is composed of 1 copy each of membrane proteins PsbA, PsbB, PsbC, PsbD, PsbE, PsbF, PsbH, PsbI, PsbJ, PsbK, PsbL, PsbM, PsbT, PsbX, PsbY, PsbZ, Psb30/Ycf12, at least 3 peripheral proteins of the oxygen-evolving complex and a large number of cofactors. It forms dimeric complexes.

The protein resides in the plastid. The protein localises to the chloroplast thylakoid membrane. Its function is as follows. Found at the monomer-monomer interface of the photosystem II (PS II) dimer, plays a role in assembly and dimerization of PSII. PSII is a light-driven water plastoquinone oxidoreductase, using light energy to abstract electrons from H(2)O, generating a proton gradient subsequently used for ATP formation. The sequence is that of Photosystem II reaction center protein T from Gracilaria tenuistipitata var. liui (Red alga).